Here is a 143-residue protein sequence, read N- to C-terminus: Transcriptional regulator MraZ (143 aa).

2 consecutive SpoVT-AbrB domains span residues 5-47 (SHTP…PMAE) and 76-119 (AADD…DAQR).

It belongs to the MraZ family. Forms oligomers.

The protein resides in the cytoplasm. It is found in the nucleoid. The chain is Transcriptional regulator MraZ from Frankia alni (strain DSM 45986 / CECT 9034 / ACN14a).